The chain runs to 150 residues: MESANASTSATTIDQLCKTFNLSMHTLQINCVFCKNALTTAEIYSYAYKQLKVLFRGGYPYAACACCLEFHGKINQYRHFDYAGYATTVEEETKQDILDVLIRCYLCHKPLCEVEKVKHILTKARFIKLNCTWKGRCLHCWTTCMEDMLP.

2 zinc fingers span residues Cys31–Cys67 and Cys104–Cys140.

Belongs to the papillomaviridae E6 protein family. As to quaternary structure, forms homodimers. Interacts with ubiquitin-protein ligase UBE3A/E6-AP; this interaction stimulates UBE3A ubiquitin activity. Interacts with host TP53 and EP300; this interaction inhibits TP53 activity. Interacts with human ZYX.

Its subcellular location is the host cytoplasm. It localises to the host nucleus. Functionally, plays a major role in the induction and maintenance of cellular transformation. E6 associates with host UBE3A/E6-AP ubiquitin-protein ligase and modulates its activity. Sequesters tumor suppressor TP53 in the host cytoplasm and modulates its activity by interacting with host EP300 that results in the reduction of TP53 acetylation and activation. In turn, apoptosis induced by DNA damage is inhibited. E6 also protects host keratinocytes from apoptosis by mediating the degradation of host BAK1. May also inhibit host immune response. This Human papillomavirus type 6a protein is Protein E6.